The chain runs to 110 residues: Transcription factor S (110 aa).

Zn(2+)-binding residues include Cys4, Cys7, Cys22, Cys25, Cys71, Cys74, Cys99, and Cys102. Residues 4 to 25 (CPKCGNLMLPDRKRKVWVCRSC) form a C4-type zinc finger. The segment at 67–107 (TKITCPKCGNDTAYWWEMQTRAGDEPSTIFYKCTKCGHTWR) adopts a TFIIS-type zinc-finger fold.

This sequence belongs to the archaeal RpoM/eukaryotic RPA12/RPB9/RPC11 RNA polymerase family.

In terms of biological role, induces RNA cleavage activity in the RNA polymerase. In its presence, the cleavage activity of the RNA polymerase truncates the RNA back to position +15 in a stepwise manner by releasing mainly dinucleotides from the 3'-end of the nascent RNA. The truncated RNAs are able to continue elongation. Involved in transcriptional proofreading and fidelity. Misincorporation of nucleotides during elongation of transcription leads to arrested elongation complexes which are rescued by TFS-promoted removal of a dinucleotide from the 3'-end. TFS is able to induce a cleavage resynthesis cycle in stalled elongation complexes (resulting from the next missing nucleotide or a reduced incorporation rate of a wrong nucleotide) preventing misincorporation and enabling proofreading in a post-incorporation manner. Pausing of elongation complexes is the main determinant of TFS-induced RNA cleavage. The chain is Transcription factor S from Thermococcus celer.